The primary structure comprises 319 residues: 8-methylmenaquinol:fumarate reductase iron-sulfur subunit (319 aa).

Residues 1–96 enclose the 2Fe-2S ferredoxin-type domain; the sequence is MKFIIDRFDG…TFRISPLGNH (96 aa). Residues C51, C56, C59, and C71 each coordinate [2Fe-2S] cluster. 4Fe-4S ferredoxin-type domains lie at 139-168 and 193-224; these read FDRI…QSDY and VKPA…AEDI. 8 residues coordinate [4Fe-4S] cluster: C148, C151, C154, C158, C204, C207, C210, and C214.

Belongs to the succinate dehydrogenase/fumarate reductase iron-sulfur protein family. As to quaternary structure, the MFR complex is composed of three subunits: a flavoprotein (SdhA), an iron-sulfur protein (SdhB), and one hydrophobic anchor protein (SdhE). [2Fe-2S] cluster serves as cofactor. It depends on [4Fe-4S] cluster as a cofactor.

The protein resides in the periplasm. Its subcellular location is the cell membrane. It carries out the reaction 8-methylmenaquinone-6 + succinate = 8-methylmenaquinol-6 + fumarate. Functionally, iron-sulfur subunit of 8-methylmenaquinol:fumarate reductase (MFR), that catalyzes the reduction of fumarate using 8-methylmenaquinol-6 as electron donor. The complex shows no succinate oxidation activity. Is involved in anaerobic metabolism. This Wolinella succinogenes (strain ATCC 29543 / DSM 1740 / CCUG 13145 / JCM 31913 / LMG 7466 / NCTC 11488 / FDC 602W) (Vibrio succinogenes) protein is 8-methylmenaquinol:fumarate reductase iron-sulfur subunit.